We begin with the raw amino-acid sequence, 200 residues long: NADH-quinone oxidoreductase subunit C (200 aa).

This sequence belongs to the complex I 30 kDa subunit family. As to quaternary structure, NDH-1 is composed of 14 different subunits. Subunits NuoB, C, D, E, F, and G constitute the peripheral sector of the complex.

It localises to the cell inner membrane. It carries out the reaction a quinone + NADH + 5 H(+)(in) = a quinol + NAD(+) + 4 H(+)(out). Its function is as follows. NDH-1 shuttles electrons from NADH, via FMN and iron-sulfur (Fe-S) centers, to quinones in the respiratory chain. The immediate electron acceptor for the enzyme in this species is believed to be ubiquinone. Couples the redox reaction to proton translocation (for every two electrons transferred, four hydrogen ions are translocated across the cytoplasmic membrane), and thus conserves the redox energy in a proton gradient. The polypeptide is NADH-quinone oxidoreductase subunit C (Ruegeria pomeroyi (strain ATCC 700808 / DSM 15171 / DSS-3) (Silicibacter pomeroyi)).